The sequence spans 79 residues: U-actitoxin-Bgr3d (79 aa).

A signal peptide spans 1–21 (MSYERLLCLVLVASFIAASVA). Residues 22–38 (QHPGDAPRMEDDSSAIQ) constitute a propeptide that is removed on maturation. 3 disulfides stabilise this stretch: Cys-44/Cys-76, Cys-46/Cys-69, and Cys-59/Cys-77.

This sequence belongs to the sea anemone type 3 (BDS) potassium channel toxin family.

The protein resides in the secreted. The protein localises to the nematocyst. In terms of biological role, potently and selectively inhibits voltage-gated potassium channels Kv11/KCNH/ERG. Acts as a gating-modifier toxin that shifts the voltage-dependence of ERG activation in the positive direction and suppresses its current amplitudes elicited by strong depolarizing pulses that maximally activate the channels. This chain is U-actitoxin-Bgr3d, found in Bunodosoma granuliferum (Red warty sea anemone).